Consider the following 448-residue polypeptide: Phosphoglucosamine mutase (448 aa).

S100 (phosphoserine intermediate) is an active-site residue. Residues S100, D240, D242, and D244 each coordinate Mg(2+). At S100 the chain carries Phosphoserine.

The protein belongs to the phosphohexose mutase family. Mg(2+) is required as a cofactor. In terms of processing, activated by phosphorylation.

The catalysed reaction is alpha-D-glucosamine 1-phosphate = D-glucosamine 6-phosphate. Its function is as follows. Catalyzes the conversion of glucosamine-6-phosphate to glucosamine-1-phosphate. This Bacillus cereus (strain B4264) protein is Phosphoglucosamine mutase.